The chain runs to 110 residues: Nucleoid-associated protein YpAngola_A2890 (110 aa).

The segment at lysine 90–phenylalanine 110 is disordered.

This sequence belongs to the YbaB/EbfC family. As to quaternary structure, homodimer.

Its subcellular location is the cytoplasm. The protein resides in the nucleoid. Its function is as follows. Binds to DNA and alters its conformation. May be involved in regulation of gene expression, nucleoid organization and DNA protection. In Yersinia pestis bv. Antiqua (strain Angola), this protein is Nucleoid-associated protein YpAngola_A2890.